A 257-amino-acid polypeptide reads, in one-letter code: Putative hydro-lyase Bcen2424_3550 (257 aa).

Belongs to the D-glutamate cyclase family.

The protein is Putative hydro-lyase Bcen2424_3550 of Burkholderia cenocepacia (strain HI2424).